A 1617-amino-acid polypeptide reads, in one-letter code: Mediator of RNA polymerase II transcription subunit 12 (1617 aa).

Disordered regions lie at residues 25–114 (RADL…PSLS) and 1519–1552 (PVSI…QPAF). A compositionally biased stretch (polar residues) spans 40–51 (EQPSMPVAQTQG). Basic and acidic residues predominate over residues 66-80 (VLEREPPAKRLKIDV). The segment covering 99 to 111 (SKSTPGATTSKPP) has biased composition (polar residues). The segment covering 1523-1543 (PSPAASGSTPAPTPSGNSTGG) has biased composition (low complexity).

The protein belongs to the Mediator complex subunit 12 family. Component of the srb8-11 complex, which itself associates with the Mediator complex.

It localises to the nucleus. Component of the srb8-11 complex. The srb8-11 complex is a regulatory module of the Mediator complex which is itself involved in regulation of basal and activated RNA polymerase II-dependent transcription. The srb8-11 complex may be involved in the transcriptional repression of a subset of genes regulated by Mediator. It may inhibit the association of the Mediator complex with RNA polymerase II to form the holoenzyme complex. This is Mediator of RNA polymerase II transcription subunit 12 (srb8) from Aspergillus fumigatus (strain ATCC MYA-4609 / CBS 101355 / FGSC A1100 / Af293) (Neosartorya fumigata).